The sequence spans 414 residues: N-carbamoyl-L-amino-acid amidohydrolase (414 aa).

Residues His-83, Asp-94, Glu-129, and His-195 each coordinate a divalent metal cation. An N-carbamoyl-L-alpha-amino acid-binding residues include Gln-198, His-231, Asn-281, Arg-294, and Gly-363. Positions 214-333 (GIAGPSWFKV…QIEKNMAAVP (120 aa)) are involved in dimerization. His-388 is an a divalent metal cation binding site.

Belongs to the peptidase M20 family. Homodimer. Mn(2+) is required as a cofactor. The cofactor is Ni(2+). Co(2+) serves as cofactor. Requires Fe(2+) as cofactor.

The enzyme catalyses an N-carbamoyl-L-alpha-amino acid + H2O + 2 H(+) = an L-alpha-amino acid + NH4(+) + CO2. The catalysed reaction is N-carbamoyl-L-methionine + H2O + 2 H(+) = L-methionine + NH4(+) + CO2. Catalyzes the hydrolysis of N-carbamoyl-L-alpha-amino acids to free L-alpha-amino acids. Is strictly L-specific since it is inactive toward N-carbamoyl-D-alpha-amino acids. This is N-carbamoyl-L-amino-acid amidohydrolase from Pseudomonas sp. (strain NS671).